A 373-amino-acid chain; its full sequence is Cell division protein FtsZ 1 (373 aa).

Residues 51 to 55 (GAGCN), 138 to 140 (GTG), Glu-169, Arg-173, and Asp-216 contribute to the GTP site. The interval 354–373 (EESYFGEEERRPIKLDLDEL) is disordered. The span at 360 to 373 (EEERRPIKLDLDEL) shows a compositional bias: basic and acidic residues.

The protein belongs to the FtsZ family. In terms of assembly, homodimer. Polymerizes to form a dynamic ring structure in a strictly GTP-dependent manner. Interacts directly with several other division proteins.

It is found in the cytoplasm. In terms of biological role, essential cell division protein that forms a contractile ring structure (Z ring) at the future cell division site. The regulation of the ring assembly controls the timing and the location of cell division. One of the functions of the FtsZ ring is to recruit other cell division proteins to the septum to produce a new cell wall between the dividing cells. Binds GTP and shows GTPase activity. This is Cell division protein FtsZ 1 from Thermococcus kodakarensis (strain ATCC BAA-918 / JCM 12380 / KOD1) (Pyrococcus kodakaraensis (strain KOD1)).